We begin with the raw amino-acid sequence, 585 residues long: Glutathione S-transferase C-terminal domain-containing protein homolog (585 aa).

The GST C-terminal domain occupies 120-275 (LGFKGSCLLA…DKCARVLRDL (156 aa)).

It belongs to the GSTCD family.

In Drosophila melanogaster (Fruit fly), this protein is Glutathione S-transferase C-terminal domain-containing protein homolog.